The following is a 129-amino-acid chain: Large ribosomal subunit protein bL12 (129 aa).

Positions 94–113 (TEGLPKTVKEKTSKSDAEDT) are disordered.

This sequence belongs to the bacterial ribosomal protein bL12 family. Homodimer. Part of the ribosomal stalk of the 50S ribosomal subunit. Forms a multimeric L10(L12)X complex, where L10 forms an elongated spine to which 2 to 4 L12 dimers bind in a sequential fashion. Binds GTP-bound translation factors.

Functionally, forms part of the ribosomal stalk which helps the ribosome interact with GTP-bound translation factors. Is thus essential for accurate translation. This Chlamydia pneumoniae (Chlamydophila pneumoniae) protein is Large ribosomal subunit protein bL12.